The primary structure comprises 413 residues: uncharacterized protein (413 aa).

An N-terminal signal peptide occupies residues 1–20 (MRVIIVIMMVVFVVVGTSSG).

This is an uncharacterized protein from Archaeoglobus fulgidus (strain ATCC 49558 / DSM 4304 / JCM 9628 / NBRC 100126 / VC-16).